The following is a 35-amino-acid chain: uncharacterized protein (35 aa).

The signal sequence occupies residues 1–25; sequence MTERKLLQLLRRPFISLSLFTALRA.

This is an uncharacterized protein from Saccharomyces cerevisiae (strain ATCC 204508 / S288c) (Baker's yeast).